A 437-amino-acid chain; its full sequence is CCA-adding enzyme (437 aa).

Positions 47 and 50 each coordinate ATP. 2 residues coordinate CTP: Ser47 and Arg50. Residues Glu59, Asp61, and Asp110 each coordinate Mg(2+). His133, Lys152, and Tyr161 together coordinate ATP. CTP is bound by residues His133, Lys152, and Tyr161.

It belongs to the tRNA nucleotidyltransferase/poly(A) polymerase family. Archaeal CCA-adding enzyme subfamily. In terms of assembly, homodimer. Mg(2+) serves as cofactor.

It catalyses the reaction a tRNA precursor + 2 CTP + ATP = a tRNA with a 3' CCA end + 3 diphosphate. It carries out the reaction a tRNA with a 3' CCA end + 2 CTP + ATP = a tRNA with a 3' CCACCA end + 3 diphosphate. In terms of biological role, catalyzes the addition and repair of the essential 3'-terminal CCA sequence in tRNAs without using a nucleic acid template. Adds these three nucleotides in the order of C, C, and A to the tRNA nucleotide-73, using CTP and ATP as substrates and producing inorganic pyrophosphate. tRNA 3'-terminal CCA addition is required both for tRNA processing and repair. Also involved in tRNA surveillance by mediating tandem CCA addition to generate a CCACCA at the 3' terminus of unstable tRNAs. While stable tRNAs receive only 3'-terminal CCA, unstable tRNAs are marked with CCACCA and rapidly degraded. The structural flexibility of RNA controls the choice between CCA versus CCACCA addition: following the first CCA addition cycle, nucleotide-binding to the active site triggers a clockwise screw motion, producing torque on the RNA. This ejects stable RNAs, whereas unstable RNAs are refolded while bound to the enzyme and subjected to a second CCA catalytic cycle. This is CCA-adding enzyme from Archaeoglobus fulgidus (strain ATCC 49558 / DSM 4304 / JCM 9628 / NBRC 100126 / VC-16).